Consider the following 417-residue polypeptide: Lipoyl synthase, mitochondrial (417 aa).

Positions 35–56 are disordered; it reads EANPTDLAGLKRKAKRRPTKLA. Residues 44–53 show a composition bias toward basic residues; that stretch reads LKRKAKRRPT. [4Fe-4S] cluster-binding residues include C122, C127, C133, C152, C156, C159, and S367. The Radical SAM core domain occupies 137-356; sequence KKSEATATIM…RDKALEMGFL (220 aa). The interval 389–417 is disordered; sequence IEEQQHDKENNNLLLSKEDEKTTQEKANF. Basic and acidic residues predominate over residues 391-417; sequence EQQHDKENNNLLLSKEDEKTTQEKANF.

This sequence belongs to the radical SAM superfamily. Lipoyl synthase family. Requires [4Fe-4S] cluster as cofactor.

It localises to the mitochondrion. The catalysed reaction is [[Fe-S] cluster scaffold protein carrying a second [4Fe-4S](2+) cluster] + N(6)-octanoyl-L-lysyl-[protein] + 2 oxidized [2Fe-2S]-[ferredoxin] + 2 S-adenosyl-L-methionine + 4 H(+) = [[Fe-S] cluster scaffold protein] + N(6)-[(R)-dihydrolipoyl]-L-lysyl-[protein] + 4 Fe(3+) + 2 hydrogen sulfide + 2 5'-deoxyadenosine + 2 L-methionine + 2 reduced [2Fe-2S]-[ferredoxin]. It participates in protein modification; protein lipoylation via endogenous pathway; protein N(6)-(lipoyl)lysine from octanoyl-[acyl-carrier-protein]: step 2/2. Functionally, catalyzes the radical-mediated insertion of two sulfur atoms into the C-6 and C-8 positions of the octanoyl moiety bound to the lipoyl domains of lipoate-dependent enzymes, thereby converting the octanoylated domains into lipoylated derivatives. The polypeptide is Lipoyl synthase, mitochondrial (Komagataella phaffii (strain GS115 / ATCC 20864) (Yeast)).